The sequence spans 407 residues: Phosphopentomutase (407 aa).

6 residues coordinate Mn(2+): aspartate 10, aspartate 306, histidine 311, aspartate 347, histidine 348, and histidine 359.

The protein belongs to the phosphopentomutase family. Mn(2+) serves as cofactor.

It localises to the cytoplasm. The enzyme catalyses 2-deoxy-alpha-D-ribose 1-phosphate = 2-deoxy-D-ribose 5-phosphate. It catalyses the reaction alpha-D-ribose 1-phosphate = D-ribose 5-phosphate. It participates in carbohydrate degradation; 2-deoxy-D-ribose 1-phosphate degradation; D-glyceraldehyde 3-phosphate and acetaldehyde from 2-deoxy-alpha-D-ribose 1-phosphate: step 1/2. Its function is as follows. Isomerase that catalyzes the conversion of deoxy-ribose 1-phosphate (dRib-1-P) and ribose 1-phosphate (Rib-1-P) to deoxy-ribose 5-phosphate (dRib-5-P) and ribose 5-phosphate (Rib-5-P), respectively. The protein is Phosphopentomutase of Pectobacterium carotovorum subsp. carotovorum (strain PC1).